The sequence spans 330 residues: PDZ and LIM domain protein 4 (330 aa).

The 84-residue stretch at 1–84 (MPHSVTLRGP…HLTLSVSRPE (84 aa)) folds into the PDZ domain. Residues 104-180 (IDPEIQDGSP…DPARGLPRSR (77 aa)) form a disordered region. Residues 111 to 121 (GSPTTSRRPSG) are compositionally biased toward low complexity. Phosphoserine occurs at positions 112, 116, 120, and 135. Polar residues predominate over residues 148 to 163 (NGSSEATLPAQMSTLH). The 60-residue stretch at 253 to 312 (PECTRCGHGIVGTIVKARDKLYHPECFMCSDCGLNLKQRGYFFLDERLYCESHAKARVKP) folds into the LIM zinc-binding domain.

Homodimer. Interacts with PTPN13. Interacts (via C-terminus only or via combined C-terminus and LIM domain, but not LIM domain only) with PTPN13 (via the second or fourth PDZ domains). Found in a complex with PTPN13 and TRIP6. Interacts (via PDZ domain) with ACTN1 and ACTN2 (via C-terminal SDL residues). Interacts (via PDZ domain) with TRIP6 (via the second LIM domain or via the third LIM domain plus C-terminus). Interacts (via LIM domain) with GRIA1 (via C-terminus); this interaction as well as the interaction with alpha-actinin is required for their colocalization in early endosomes. Interacts with PDLIM1. Forms (via LIM domain) a heterodimer with PDLIM3. Interacts directly with SRC (via kinase domain and to a lesser extent the SH2 domain). Isoform 2 interacts with NQO1. NQO1-stabilized isoform 2 heterodimerizes with isoform 1. Phosphorylated on tyrosine residue(s). Can be dephosphorylated by PTPN13. In terms of tissue distribution, found in brain.

The protein localises to the cytoplasm. The protein resides in the cytoskeleton. Its subcellular location is the nucleus. It localises to the perinuclear region. It is found in the cell projection. The protein localises to the lamellipodium. The protein resides in the dendritic spine. Its subcellular location is the early endosome membrane. It localises to the recycling endosome membrane. It is found in the synapse. The protein localises to the synaptosome. Functionally, suppresses SRC activation by recognizing and binding to active SRC and facilitating PTPN13-mediated dephosphorylation of SRC 'Tyr-419' leading to its inactivation. Inactivated SRC dissociates from this protein allowing the initiation of a new SRC inactivation cycle. Involved in reorganization of the actin cytoskeleton. In nonmuscle cells, binds to ACTN1 (alpha-actinin-1), increases the affinity of ACTN1 to F-actin (filamentous actin), and promotes formation of actin stress fibers. Involved in regulation of the synaptic AMPA receptor transport in dendritic spines of hippocampal pyramidal neurons directing the receptors toward an insertion at the postsynaptic membrane. Links endosomal surface-internalized GRIA1-containing AMPA receptors to the alpha-actinin/actin cytoskeleton. Increases AMPA receptor-mediated excitatory postsynaptic currents in neurons. Its function is as follows. Involved in reorganization of the actin cytoskeleton and in regulation of cell migration. In response to oxidative stress, binds to NQO1, which stabilizes it and protects it from ubiquitin-independent degradation by the core 20S proteasome. Stabilized protein is able to heterodimerize with isoform 1 changing the subcellular location of it from cytoskeleton and nuclei to cytosol, leading to loss of isoforms 1 ability to induce formation of actin stress fibers. Counteracts the effects produced by isoform 1 on organization of actin cytoskeleton and cell motility to fine-tune actin cytoskeleton rearrangement and to attenuate cell migration. This Homo sapiens (Human) protein is PDZ and LIM domain protein 4 (PDLIM4).